The chain runs to 229 residues: Potassium/proton antiporter CemA (229 aa).

Helical transmembrane passes span 7–27 (FTSL…SLSF), 114–134 (IICF…LVIL), 145–165 (LSDT…IGFH), and 189–209 (ILSS…KFWV).

This sequence belongs to the CemA family.

The protein resides in the plastid. It is found in the chloroplast inner membrane. The enzyme catalyses K(+)(in) + H(+)(out) = K(+)(out) + H(+)(in). Contributes to K(+)/H(+) antiport activity by supporting proton efflux to control proton extrusion and homeostasis in chloroplasts in a light-dependent manner to modulate photosynthesis. Prevents excessive induction of non-photochemical quenching (NPQ) under continuous-light conditions. Indirectly promotes efficient inorganic carbon uptake into chloroplasts. The chain is Potassium/proton antiporter CemA from Daucus carota (Wild carrot).